Here is a 56-residue protein sequence, read N- to C-terminus: Large ribosomal subunit protein uL30 (56 aa).

It belongs to the universal ribosomal protein uL30 family. As to quaternary structure, part of the 50S ribosomal subunit.

The polypeptide is Large ribosomal subunit protein uL30 (Oleidesulfovibrio alaskensis (strain ATCC BAA-1058 / DSM 17464 / G20) (Desulfovibrio alaskensis)).